We begin with the raw amino-acid sequence, 74 residues long: Small ribosomal subunit protein bS18 (74 aa).

It belongs to the bacterial ribosomal protein bS18 family. As to quaternary structure, part of the 30S ribosomal subunit. Forms a tight heterodimer with protein bS6.

Functionally, binds as a heterodimer with protein bS6 to the central domain of the 16S rRNA, where it helps stabilize the platform of the 30S subunit. In Thioalkalivibrio sulfidiphilus (strain HL-EbGR7), this protein is Small ribosomal subunit protein bS18.